The primary structure comprises 162 residues: NADH-quinone oxidoreductase subunit I 2 (162 aa).

2 consecutive 4Fe-4S ferredoxin-type domains span residues 52 to 82 and 93 to 122; these read LRRY…IEAG and VRYD…EGPN. Cys-62, Cys-65, Cys-68, Cys-72, Cys-102, Cys-105, Cys-108, and Cys-112 together coordinate [4Fe-4S] cluster.

The protein belongs to the complex I 23 kDa subunit family. As to quaternary structure, NDH-1 is composed of 14 different subunits. Subunits NuoA, H, J, K, L, M, N constitute the membrane sector of the complex. [4Fe-4S] cluster serves as cofactor.

The protein localises to the cell inner membrane. It carries out the reaction a quinone + NADH + 5 H(+)(in) = a quinol + NAD(+) + 4 H(+)(out). NDH-1 shuttles electrons from NADH, via FMN and iron-sulfur (Fe-S) centers, to quinones in the respiratory chain. The immediate electron acceptor for the enzyme in this species is believed to be ubiquinone. Couples the redox reaction to proton translocation (for every two electrons transferred, four hydrogen ions are translocated across the cytoplasmic membrane), and thus conserves the redox energy in a proton gradient. This Rhodopseudomonas palustris (strain HaA2) protein is NADH-quinone oxidoreductase subunit I 2.